The following is a 347-amino-acid chain: LRP2-binding protein (347 aa).

One copy of the TPR repeat lies at 59-92; sequence TLAYFLRGQLYFEEGWYEEALEQFEEIKEKDHQA. Sel1-like repeat units follow at residues 93–125, 133–168, 173–206, 207–242, 243–277, and 297–332; these read TYQLGVMYYDGLGTTLDAEKGVDYMKKILDSPC, FAAAYNLGRAYYEGKGVKRSNEEAERLWLIAADNGN, VKAQSMLGLYYSTKEPKELEKAFYWHSEACGNGN, LESQGALGLMYLYGQGIRQDTEAALQCLREAAERGN, VYAQGNLVEYYYKMKFFTKCVAFSKRIADYDEVHD, and AMASFYHARCLQLGLGITRDETTAKHYYSKACRLNP.

Interacts with LRP2.

The protein localises to the cytoplasm. May act as an adapter that regulates LRP2 function. This Homo sapiens (Human) protein is LRP2-binding protein (LRP2BP).